Here is a 178-residue protein sequence, read N- to C-terminus: Large ribosomal subunit protein uL10 (178 aa).

The protein belongs to the universal ribosomal protein uL10 family. Part of the ribosomal stalk of the 50S ribosomal subunit. The N-terminus interacts with L11 and the large rRNA to form the base of the stalk. The C-terminus forms an elongated spine to which L12 dimers bind in a sequential fashion forming a multimeric L10(L12)X complex.

Functionally, forms part of the ribosomal stalk, playing a central role in the interaction of the ribosome with GTP-bound translation factors. The protein is Large ribosomal subunit protein uL10 of Stenotrophomonas maltophilia (strain R551-3).